Here is a 280-residue protein sequence, read N- to C-terminus: Hematopoietically-expressed homeobox protein HHEX homolog (280 aa).

Disordered stretches follow at residues 1–35 and 221–280; these read MSTL…GLAP and RRVK…EKEA. The segment at residues 165–224 is a DNA-binding region (homeobox); that stretch reads RKGGQVRFSNDQTMELEKKFESQKYLSPPERKKLAKLLQLSERQVKTWFQNRRAKWRRVK. Residues 232–252 show a composition bias toward basic and acidic residues; sequence GEGDENSHEKPRDLDRDDFSR.

The protein localises to the nucleus. Transcription factor that may play a central role in activating or maintaining gene expression in the vegetal pole. Part of a gene regulatory circuit with Erg and Tgif that operates early in mesoderm development. In Patiria miniata (Bat star), this protein is Hematopoietically-expressed homeobox protein HHEX homolog.